Reading from the N-terminus, the 360-residue chain is Probable cinnamyl alcohol dehydrogenase 6 (360 aa).

Cys48 is a Zn(2+) binding site. Thr50 provides a ligand contact to NADP(+). Zn(2+) is bound by residues His70, Glu71, Cys101, Cys104, Cys107, Cys115, and Cys164. Residues Thr168, 192 to 197 (GLGGLG), 215 to 220 (STSPAK), Thr255, Gly279, and 302 to 304 (SMT) contribute to the NADP(+) site.

Belongs to the zinc-containing alcohol dehydrogenase family. In terms of assembly, homodimer. Zn(2+) serves as cofactor.

The catalysed reaction is (E)-cinnamyl alcohol + NADP(+) = (E)-cinnamaldehyde + NADPH + H(+). It catalyses the reaction (E)-coniferol + NADP(+) = (E)-coniferaldehyde + NADPH + H(+). It carries out the reaction (E)-sinapyl alcohol + NADP(+) = (E)-sinapaldehyde + NADPH + H(+). The enzyme catalyses (E)-4-coumaroyl alcohol + NADP(+) = (E)-4-coumaraldehyde + NADPH + H(+). The catalysed reaction is (E)-caffeyl alcohol + NADP(+) = (E)-caffeyl aldehyde + NADPH + H(+). It functions in the pathway aromatic compound metabolism; phenylpropanoid biosynthesis. Its function is as follows. Involved in lignin biosynthesis. Catalyzes the final step specific for the production of lignin monomers. Catalyzes the NADPH-dependent reduction of coniferaldehyde, 5-hydroxyconiferaldehyde, sinapaldehyde, 4-coumaraldehyde and caffeyl aldehyde to their respective alcohols. This chain is Probable cinnamyl alcohol dehydrogenase 6, found in Oryza sativa subsp. japonica (Rice).